Here is a 203-residue protein sequence, read N- to C-terminus: Ribosome maturation factor RimP (203 aa).

The disordered stretch occupies residues 183–203 (FDDIETEGSAEGTTGSEEENK).

This sequence belongs to the RimP family.

The protein resides in the cytoplasm. Required for maturation of 30S ribosomal subunits. The polypeptide is Ribosome maturation factor RimP (Ruegeria sp. (strain TM1040) (Silicibacter sp.)).